The chain runs to 699 residues: Cell pattern formation-associated protein StuA (699 aa).

Disordered stretches follow at residues 1 to 20 and 31 to 97; these read MDGTPSSGPPRVEAPHLLAP and TPQF…QPEH. The segment covering 32–49 has biased composition (low complexity); sequence PQFKSQQSQPQSQSQYPS. Over residues 52–61 the composition is skewed to polar residues; sequence NPDSYSSSSP. The segment covering 75–84 has biased composition (acidic residues); sequence EDGEDYDQEE. One can recognise an HTH APSES-type domain in the interval 226 to 332; the sequence is RVTATLWEDE…HNIGALLYHP (107 aa). Residues 260–281 constitute a DNA-binding region (H-T-H motif); it reads GTKLLNVAGMTRGRRDGILKSE. Disordered regions lie at residues 372 to 594, 599 to 618, and 674 to 699; these read AMPT…MNSM, RRDDEAETPRPGPNMNDLNN, and PSYPAGPGYELARPVTNVPRRQQSFG. Residues 376–423 show a composition bias toward polar residues; sequence GYTSQQPLTNGHQSMANTPQPLTNGSQPPMNGSQTPMNGPQPPMQNGG. Composition is skewed to basic and acidic residues over residues 428–438 and 478–491; these read RVREDDDDLHR and GLKRGREEHDDMHR. Residues 520–529 show a composition bias toward polar residues; that stretch reads NLHQPLSNGD. A compositionally biased stretch (basic and acidic residues) spans 535–545; the sequence is RGRDDDDDVHR. The span at 566–594 shows a compositional bias: polar residues; the sequence is TSTSNDMLPQSPYYTLSNGAYQGPMMNSM. The tract at residues 669-695 is nuclear localization domain; sequence TVAVSPSYPAGPGYELARPVTNVPRRQ.

Belongs to the EFG1/PHD1/stuA family.

The protein localises to the nucleus. Transcription factor that regulates asexual reproduction. Binds the StuA-response elements (StRE) with the consensus sequence 5'-(A/T)CGCG(T/A)N(A/C)-3' at the promoters of target genes. Controls the expression of the gene clusters involved in the production of deoxynivalenol (DON) and 15-acetyldeoxynivalenol (15ADON). Regulates the expression of genes involved in chitin and glucan metabolism. Also controls catalase activity and cell surface hydrophobicity. Plays an important role in pathogenicity. The polypeptide is Cell pattern formation-associated protein StuA (Gibberella zeae (strain ATCC MYA-4620 / CBS 123657 / FGSC 9075 / NRRL 31084 / PH-1) (Wheat head blight fungus)).